We begin with the raw amino-acid sequence, 209 residues long: Thiamine-phosphate synthase (209 aa).

4-amino-2-methyl-5-(diphosphooxymethyl)pyrimidine is bound by residues 35-39 (QYRDK) and Asn67. Mg(2+) contacts are provided by Asp68 and Asp86. A 4-amino-2-methyl-5-(diphosphooxymethyl)pyrimidine-binding site is contributed by Thr105. 132–134 (SNT) serves as a coordination point for 2-[(2R,5Z)-2-carboxy-4-methylthiazol-5(2H)-ylidene]ethyl phosphate. 4-amino-2-methyl-5-(diphosphooxymethyl)pyrimidine is bound at residue Lys135. Gly162 provides a ligand contact to 2-[(2R,5Z)-2-carboxy-4-methylthiazol-5(2H)-ylidene]ethyl phosphate.

This sequence belongs to the thiamine-phosphate synthase family. It depends on Mg(2+) as a cofactor.

It catalyses the reaction 2-[(2R,5Z)-2-carboxy-4-methylthiazol-5(2H)-ylidene]ethyl phosphate + 4-amino-2-methyl-5-(diphosphooxymethyl)pyrimidine + 2 H(+) = thiamine phosphate + CO2 + diphosphate. The enzyme catalyses 2-(2-carboxy-4-methylthiazol-5-yl)ethyl phosphate + 4-amino-2-methyl-5-(diphosphooxymethyl)pyrimidine + 2 H(+) = thiamine phosphate + CO2 + diphosphate. The catalysed reaction is 4-methyl-5-(2-phosphooxyethyl)-thiazole + 4-amino-2-methyl-5-(diphosphooxymethyl)pyrimidine + H(+) = thiamine phosphate + diphosphate. Its pathway is cofactor biosynthesis; thiamine diphosphate biosynthesis; thiamine phosphate from 4-amino-2-methyl-5-diphosphomethylpyrimidine and 4-methyl-5-(2-phosphoethyl)-thiazole: step 1/1. Its function is as follows. Condenses 4-methyl-5-(beta-hydroxyethyl)thiazole monophosphate (THZ-P) and 2-methyl-4-amino-5-hydroxymethyl pyrimidine pyrophosphate (HMP-PP) to form thiamine monophosphate (TMP). In Pseudomonas fluorescens (strain SBW25), this protein is Thiamine-phosphate synthase.